Consider the following 228-residue polypeptide: MEMERINANTIRVMLGNDDLAQRGITVLDLLGNHKQIESFFYSILDEVDKDHTFATNEAVTFQVMPSQSGLELLISRSGQKNDDSAADQTDDEGTDTQVPDYIRQQLQGLDASDQQDHQAVDEGGYIDADKAPQTELVLKLKDFEDFISLADTLRLEGGKSDLYRYKNAYYLVLTFYPNEISSDEAHDQMAVAMEFGDRSPLSSAVLSEYGKRLMETSALETARYYFK.

Residues 79–98 (GQKNDDSAADQTDDEGTDTQ) are disordered. Over residues 85-95 (SAADQTDDEGT) the composition is skewed to acidic residues.

This sequence belongs to the MecA family. As to quaternary structure, homodimer.

Its function is as follows. Enables the recognition and targeting of unfolded and aggregated proteins to the ClpC protease or to other proteins involved in proteolysis. This is Adapter protein MecA from Lacticaseibacillus casei (strain BL23) (Lactobacillus casei).